The sequence spans 214 residues: Octanoyltransferase (214 aa).

Residues 32–207 (EDTLDEIWLV…NLLALLNHPP (176 aa)) form the BPL/LPL catalytic domain. Residues 71-78 (RGGQVTYH), 138-140 (SLG), and 151-153 (GLA) each bind substrate. Cys169 acts as the Acyl-thioester intermediate in catalysis.

It belongs to the LipB family.

It localises to the cytoplasm. The catalysed reaction is octanoyl-[ACP] + L-lysyl-[protein] = N(6)-octanoyl-L-lysyl-[protein] + holo-[ACP] + H(+). Its pathway is protein modification; protein lipoylation via endogenous pathway; protein N(6)-(lipoyl)lysine from octanoyl-[acyl-carrier-protein]: step 1/2. Its function is as follows. Catalyzes the transfer of endogenously produced octanoic acid from octanoyl-acyl-carrier-protein onto the lipoyl domains of lipoate-dependent enzymes. Lipoyl-ACP can also act as a substrate although octanoyl-ACP is likely to be the physiological substrate. The sequence is that of Octanoyltransferase from Klebsiella pneumoniae subsp. pneumoniae (strain ATCC 700721 / MGH 78578).